Reading from the N-terminus, the 637-residue chain is Biosynthetic arginine decarboxylase (637 aa).

Lysine 101 bears the N6-(pyridoxal phosphate)lysine mark. 286–296 (FDVGGGLAVDY) serves as a coordination point for substrate.

It belongs to the Orn/Lys/Arg decarboxylase class-II family. SpeA subfamily. Mg(2+) serves as cofactor. It depends on pyridoxal 5'-phosphate as a cofactor.

It catalyses the reaction L-arginine + H(+) = agmatine + CO2. Its pathway is amine and polyamine biosynthesis; agmatine biosynthesis; agmatine from L-arginine: step 1/1. Its function is as follows. Catalyzes the biosynthesis of agmatine from arginine. The sequence is that of Biosynthetic arginine decarboxylase from Shewanella piezotolerans (strain WP3 / JCM 13877).